We begin with the raw amino-acid sequence, 249 residues long: 23S rRNA (guanosine-2'-O-)-methyltransferase RlmB (249 aa).

Positions 200, 220, and 229 each coordinate S-adenosyl-L-methionine.

The protein belongs to the class IV-like SAM-binding methyltransferase superfamily. RNA methyltransferase TrmH family. RlmB subfamily.

The protein resides in the cytoplasm. The enzyme catalyses guanosine(2251) in 23S rRNA + S-adenosyl-L-methionine = 2'-O-methylguanosine(2251) in 23S rRNA + S-adenosyl-L-homocysteine + H(+). Specifically methylates the ribose of guanosine 2251 in 23S rRNA. The sequence is that of 23S rRNA (guanosine-2'-O-)-methyltransferase RlmB from Xanthomonas campestris pv. campestris (strain ATCC 33913 / DSM 3586 / NCPPB 528 / LMG 568 / P 25).